A 292-amino-acid polypeptide reads, in one-letter code: Ribosomal protein L11 methyltransferase (292 aa).

S-adenosyl-L-methionine contacts are provided by threonine 144, glycine 165, aspartate 187, and asparagine 229.

It belongs to the methyltransferase superfamily. PrmA family.

The protein localises to the cytoplasm. The catalysed reaction is L-lysyl-[protein] + 3 S-adenosyl-L-methionine = N(6),N(6),N(6)-trimethyl-L-lysyl-[protein] + 3 S-adenosyl-L-homocysteine + 3 H(+). Its function is as follows. Methylates ribosomal protein L11. The protein is Ribosomal protein L11 methyltransferase of Pseudomonas syringae pv. tomato (strain ATCC BAA-871 / DC3000).